We begin with the raw amino-acid sequence, 67 residues long: uncharacterized protein (67 aa).

The protein to E.coli YbdD.

This is an uncharacterized protein from Escherichia coli O157:H7.